A 232-amino-acid polypeptide reads, in one-letter code: uncharacterized protein (232 aa).

The interval 1–46 is disordered; the sequence is MNAHNMRGPPGDLAKVVPGSRSGWNEGSRCRQADKGDGQCRNGGRD. The span at 28 to 46 shows a compositional bias: basic and acidic residues; it reads SRCRQADKGDGQCRNGGRD.

This is an uncharacterized protein from Rhizobium meliloti (Ensifer meliloti).